The following is a 629-amino-acid chain: tRNA uridine 5-carboxymethylaminomethyl modification enzyme MnmG (629 aa).

FAD contacts are provided by residues 14-19 (GAGHAG), V126, and S181. Residue 273–287 (GPRYCPSIEDKVVRF) participates in NAD(+) binding. Q370 lines the FAD pocket.

It belongs to the MnmG family. Homodimer. Heterotetramer of two MnmE and two MnmG subunits. FAD is required as a cofactor.

It is found in the cytoplasm. Functionally, NAD-binding protein involved in the addition of a carboxymethylaminomethyl (cmnm) group at the wobble position (U34) of certain tRNAs, forming tRNA-cmnm(5)s(2)U34. The chain is tRNA uridine 5-carboxymethylaminomethyl modification enzyme MnmG from Bacillus thuringiensis (strain Al Hakam).